Consider the following 119-residue polypeptide: SGSCEVKTCWRAMPPFRKVGNVIKEKFDGATEVEMQRIGTRKQLVPKNPQFKPHTDEDLVYISPSPDFCIRDMKAGVPGTAGRHCNRTSKALGGCELLCCGRGFHTAEAELVERCSCKF.

The O-palmitoleoyl serine; by PORCN moiety is linked to residue Ser1. 2 disulfide bridges follow: Cys69–Cys100 and Cys85–Cys95. Asn86 carries N-linked (GlcNAc...) asparagine glycosylation.

This sequence belongs to the Wnt family. Post-translationally, palmitoleoylation is required for efficient binding to frizzled receptors. Depalmitoleoylation leads to Wnt signaling pathway inhibition.

The protein localises to the secreted. It is found in the extracellular space. The protein resides in the extracellular matrix. Its function is as follows. Ligand for members of the frizzled family of seven transmembrane receptors. Plays an important role in embryonic development. This chain is Protein Wnt-4 (WNT-4), found in Eptatretus stoutii (Pacific hagfish).